Here is a 178-residue protein sequence, read N- to C-terminus: Large ribosomal subunit protein bL25 (178 aa).

The protein belongs to the bacterial ribosomal protein bL25 family. CTC subfamily. In terms of assembly, part of the 50S ribosomal subunit; part of the 5S rRNA/L5/L18/L25 subcomplex. Contacts the 5S rRNA. Binds to the 5S rRNA independently of L5 and L18.

In terms of biological role, this is one of the proteins that binds to the 5S RNA in the ribosome where it forms part of the central protuberance. The sequence is that of Large ribosomal subunit protein bL25 from Campylobacter lari (strain RM2100 / D67 / ATCC BAA-1060).